The following is a 276-amino-acid chain: Putative pyridoxine kinase (276 aa).

Asparagine 139 provides a ligand contact to ATP. Glutamate 142 lines the Mg(2+) pocket. ATP-binding positions include 176 to 180 (KGGKA), aspartate 188, glycine 213, and lysine 238.

The protein belongs to the ThiD family.

It carries out the reaction pyridoxal + ATP = pyridoxal 5'-phosphate + ADP + H(+). Its function is as follows. Phosphorylates B6 vitamers; functions in a salvage pathway. Uses pyridoxal, pyridoxine, and pyridoxamine as substrates. This chain is Putative pyridoxine kinase (pdxK), found in Staphylococcus epidermidis (strain ATCC 35984 / DSM 28319 / BCRC 17069 / CCUG 31568 / BM 3577 / RP62A).